Here is a 302-residue protein sequence, read N- to C-terminus: Sulfate adenylyltransferase subunit 2 (302 aa).

It belongs to the PAPS reductase family. CysD subfamily. As to quaternary structure, heterodimer composed of CysD, the smaller subunit, and CysN.

The enzyme catalyses sulfate + ATP + H(+) = adenosine 5'-phosphosulfate + diphosphate. It functions in the pathway sulfur metabolism; hydrogen sulfide biosynthesis; sulfite from sulfate: step 1/3. Its function is as follows. With CysN forms the ATP sulfurylase (ATPS) that catalyzes the adenylation of sulfate producing adenosine 5'-phosphosulfate (APS) and diphosphate, the first enzymatic step in sulfur assimilation pathway. APS synthesis involves the formation of a high-energy phosphoric-sulfuric acid anhydride bond driven by GTP hydrolysis by CysN coupled to ATP hydrolysis by CysD. The polypeptide is Sulfate adenylyltransferase subunit 2 (Xanthomonas euvesicatoria pv. vesicatoria (strain 85-10) (Xanthomonas campestris pv. vesicatoria)).